We begin with the raw amino-acid sequence, 834 residues long: Probable phosphoenolpyruvate synthase (834 aa).

Catalysis depends on His447, which acts as the Tele-phosphohistidine intermediate. Arg550, Arg598, Glu699, Gly720, Ser721, Asn722, and Asp723 together coordinate substrate. Glu699 provides a ligand contact to Mg(2+). Asp723 lines the Mg(2+) pocket. Catalysis depends on Cys772, which acts as the Proton donor.

It belongs to the PEP-utilizing enzyme family. As to quaternary structure, homooligomer. Forms a large complex of about 2000 kDa. The cofactor is Mg(2+). Post-translationally, the N-terminus is blocked.

It catalyses the reaction pyruvate + ATP + H2O = phosphoenolpyruvate + AMP + phosphate + 2 H(+). It functions in the pathway carbohydrate biosynthesis; gluconeogenesis. Catalyzes the phosphorylation of pyruvate to phosphoenolpyruvate. In Staphylothermus marinus (strain ATCC 43588 / DSM 3639 / JCM 9404 / F1), this protein is Probable phosphoenolpyruvate synthase (ppsA).